The sequence spans 102 residues: Large ribosomal subunit protein bL21 (102 aa).

It belongs to the bacterial ribosomal protein bL21 family. In terms of assembly, part of the 50S ribosomal subunit. Contacts protein L20.

Functionally, this protein binds to 23S rRNA in the presence of protein L20. This chain is Large ribosomal subunit protein bL21, found in Bifidobacterium longum subsp. infantis (strain ATCC 15697 / DSM 20088 / JCM 1222 / NCTC 11817 / S12).